The primary structure comprises 1997 residues: Otoferlin (1997 aa).

One can recognise a C2 1 domain in the interval 1–98 (MALIVHLKTV…VEENRVEVTD (98 aa)). The Cytoplasmic portion of the chain corresponds to 1–1963 (MALIVHLKTV…ARYFLWHTYR (1963 aa)). The tract at residues 140–167 (QEEKDSQETDGLLPGSRPSTRISGEKSF) is disordered. C2 domains are found at residues 235-356 (KRSK…HKWA) and 399-530 (IEGN…FLPT). A disordered region spans residues 643–692 (VDGMSRPLRPRPRKEPGDEEEVDLIQNSSDDEGDEAGDLASVSSTPPMRP). Residues 659 to 679 (GDEEEVDLIQNSSDDEGDEAG) show a composition bias toward acidic residues. Residues 791 to 820 (RERLKSCMRELESMGQQAKSLRAQVKRHTV) are a coiled coil. C2 domains follow at residues 943–1068 (LHSF…PPRF) and 1115–1241 (RGPI…PNWN). The Ca(2+) site is built by aspartate 975, aspartate 981, aspartate 1037, aspartate 1039, and aspartate 1045. Disordered regions lie at residues 1253 to 1272 (LRNG…SMEP), 1296 to 1326 (DVAE…ESML), and 1343 to 1402 (LRQH…EKKK). Acidic residues-rich tracts occupy residues 1314 to 1325 (EEPEEEEPDESM) and 1352 to 1361 (DLEEKEEMES). Over residues 1370–1383 (KSKEKSRAAKEEKK) the composition is skewed to basic and acidic residues. C2 domains follow at residues 1464 to 1593 (LPED…ATCG) and 1714 to 1865 (DMPA…KQCT). Residues aspartate 1508, aspartate 1514, aspartate 1563, aspartate 1565, aspartate 1571, aspartate 1836, serine 1839, and aspartate 1842 each coordinate Ca(2+). The chain crosses the membrane as a helical span at residues 1964 to 1984 (WLLLKFLLLFLLLLLFALFLY). Over 1985-1997 (SLPGYLAKKILGA) the chain is Extracellular.

It belongs to the ferlin family. Interacts with SNAP25; the interaction is direct. Interacts with STX1; the interaction is direct. Interacts with RAB8B. It depends on Ca(2+) as a cofactor. In terms of tissue distribution, isoform 1 is expressed in cochlea and brain. Expressed in the cochlear and vestibular hair cells. Expressed in both inner and outer hair cells (IHCs and OHCs) and cochlear ganglions neurons at postnatal day 2 (P2) and 6 (P6). Expressed only in IHCs at postnatal day 60 (P60) (at protein level). Strongly expressed in brain and inner ear. In the inner ear, it is mainly expressed in the cochlear IHC and vestibular type I sensory hair cells. Weakly expressed in eye, heart, skeletal muscle, liver, kidney, lung and testis.

It is found in the cytoplasmic vesicle. The protein resides in the secretory vesicle. It localises to the synaptic vesicle membrane. The protein localises to the basolateral cell membrane. Its subcellular location is the endoplasmic reticulum membrane. It is found in the golgi apparatus membrane. The protein resides in the presynaptic cell membrane. It localises to the cell membrane. In terms of biological role, key calcium ion sensor involved in the Ca(2+)-triggered synaptic vesicle-plasma membrane fusion and in the control of neurotransmitter release at these output synapses. Interacts in a calcium-dependent manner to the presynaptic SNARE proteins at ribbon synapses of cochlear inner hair cells (IHCs) to trigger exocytosis of neurotransmitter. Also essential to synaptic exocytosis in immature outer hair cells (OHCs). May also play a role within the recycling of endosomes. The chain is Otoferlin (Otof) from Mus musculus (Mouse).